Consider the following 203-residue polypeptide: Endoplasmic reticulum transmembrane protein 3 (203 aa).

The Lumenal segment spans residues 1–6 (MSLYYT). The chain crosses the membrane as a helical span at residues 7–27 (LVFAILVVEIFMFSILALPIP). Residues 28-45 (SRYRRPLTLLLLKPFKSS) are Cytoplasmic-facing. A helical membrane pass occupies residues 46–66 (TVQVAIKCVLGFILLLFIDCI). Topologically, residues 67–110 (NRVYSIDKELQLSSASQNNGAIIAQDRIEVLSRKFFAQRNMYLT) are lumenal. A helical membrane pass occupies residues 111-131 (GITLFLTFVVVRTFGLVIELL). Residues 132–203 (TMKDIYRASP…KSESLQEEIN (72 aa)) are Cytoplasmic-facing. The segment at 142–171 (PVASSDVKKNDSVTAEAAAQSGASKDDHGD) is disordered.

The protein belongs to the BCAP29/BCAP31 family.

Its subcellular location is the endoplasmic reticulum membrane. Its function is as follows. May play a role in anterograde transport of membrane proteins from the endoplasmic reticulum to the Golgi. May be involved in invertase secretion. In Saccharomyces cerevisiae (strain ATCC 204508 / S288c) (Baker's yeast), this protein is Endoplasmic reticulum transmembrane protein 3 (YET3).